Consider the following 142-residue polypeptide: Biogenesis of lysosome-related organelles complex 1 subunit 2 (142 aa).

The interval 1-33 is disordered; the sequence is MAAAAEGVLATRSDEPARDDAAVETAEEAKEPA. Alanine 2 carries the post-translational modification N-acetylalanine. Residues 12-33 show a composition bias toward basic and acidic residues; sequence RSDEPARDDAAVETAEEAKEPA. The stretch at 79–127 forms a coiled coil; it reads EMKDIAINISRNLKDLNQKYAGLQPYLDQINVIEEQVAALEQAAYKLDA.

This sequence belongs to the BLOC1S2 family. In terms of assembly, component of the biogenesis of lysosome-related organelles complex 1 (BLOC-1) composed of BLOC1S1, BLOC1S2, BLOC1S3, BLOC1S4, BLOC1S5, BLOC1S6, DTNBP1/BLOC1S7 and SNAPIN/BLOC1S8. Octamer composed of one copy each BLOC1S1, BLOC1S2, BLOC1S3, BLOC1S4, BLOC1S5, BLOC1S6, DTNBP1/BLOC1S7 and SNAPIN/BLOC1S8. Interacts directly with BLOC1S1, BLOC1S3, BLOC1S4, BLOC1S5 and SNAPIN. The BLOC-1 complex associates with the AP-3 protein complex and membrane protein cargos. Component of the BLOC-one-related complex (BORC) which is composed of BLOC1S1, BLOC1S2, BORCS5, BORCS6, BORCS7, BORCS8, KXD1 and SNAPIN. Interacts with gamma-tubulin. Interacts with IFT57. Isoform 1 and isoform 2 are widely expressed. Expressed in various malignant tumor tissues (at protein level).

The protein resides in the cytoplasm. Its subcellular location is the cytoskeleton. It is found in the microtubule organizing center. It localises to the centrosome. The protein localises to the lysosome membrane. Its function is as follows. Component of the BLOC-1 complex, a complex that is required for normal biogenesis of lysosome-related organelles (LRO), such as platelet dense granules and melanosomes. In concert with the AP-3 complex, the BLOC-1 complex is required to target membrane protein cargos into vesicles assembled at cell bodies for delivery into neurites and nerve terminals. The BLOC-1 complex, in association with SNARE proteins, is also proposed to be involved in neurite extension. As part of the BORC complex may play a role in lysosomes movement and localization at the cell periphery. Associated with the cytosolic face of lysosomes, the BORC complex may recruit ARL8B and couple lysosomes to microtubule plus-end-directed kinesin motor. May play a role in cell proliferation. This Homo sapiens (Human) protein is Biogenesis of lysosome-related organelles complex 1 subunit 2 (BLOC1S2).